The following is a 372-amino-acid chain: DNA replication and repair protein RecF (372 aa).

Gly30–Thr37 provides a ligand contact to ATP.

This sequence belongs to the RecF family.

The protein localises to the cytoplasm. Functionally, the RecF protein is involved in DNA metabolism; it is required for DNA replication and normal SOS inducibility. RecF binds preferentially to single-stranded, linear DNA. It also seems to bind ATP. In Shouchella clausii (strain KSM-K16) (Alkalihalobacillus clausii), this protein is DNA replication and repair protein RecF.